The chain runs to 443 residues: GPI mannosyltransferase 1 (443 aa).

11 consecutive transmembrane segments (helical) span residues 8 to 28 (PFMVYGLAAGLRTVLLFYGAW), 68 to 88 (PLLAWMLLPTTWAIPGFFSFG), 90 to 110 (ALFALSDVVAGWLVAKSLTLT), 136 to 156 (TRGSSEGLLGVLVVALLWAVL), 160 to 180 (IYLGGVLLGIGVHFKIYPFIY), 232 to 252 (LTLISLLTFVALNAAMYLHYG), 273 to 291 (FSPYSTLLYLTAASSAGAV), 302 to 322 (FESLAFIPQLLISVVVIPLVL), 347 to 367 (SQYFLWYLIFLPFYLPTSSLL), 374 to 394 (IAVAALWILGQALWLQQGYLL), and 406 to 426 (LFLASLGFFAVNAWILGVIVA).

Belongs to the PIGM family.

The protein localises to the endoplasmic reticulum membrane. It participates in glycolipid biosynthesis; glycosylphosphatidylinositol-anchor biosynthesis. Its function is as follows. Mannosyltransferase involved in glycosylphosphatidylinositol-anchor biosynthesis. Transfers the first alpha-1,4-mannose to GlcN-acyl-PI during GPI precursor assembly. Required for cell wall integrity. The protein is GPI mannosyltransferase 1 (gpi14) of Emericella nidulans (strain FGSC A4 / ATCC 38163 / CBS 112.46 / NRRL 194 / M139) (Aspergillus nidulans).